A 411-amino-acid chain; its full sequence is 2-oxoglutarate-dependent dioxygenase AOP3 (411 aa).

The 98-residue stretch at 259–356 (GNASVGAKEA…RYAAALFSNP (98 aa)) folds into the Fe2OG dioxygenase domain. Residues His-279, Asp-281, and His-336 each coordinate Fe cation. Arg-347 is a binding site for 2-oxoglutarate.

This sequence belongs to the iron/ascorbate-dependent oxidoreductase family. Fe(2+) is required as a cofactor. Not expressed.

In terms of biological role, 2-oxoglutarate-dependent dioxygenase involved in glucosinolates biosynthesis. Catalyzes the conversion of methylsulfinylalkyl glucosinolates to hydroxyalkyl glucosinolates. The chain is 2-oxoglutarate-dependent dioxygenase AOP3 (AOP3) from Arabidopsis thaliana (Mouse-ear cress).